Reading from the N-terminus, the 102-residue chain is Small ribosomal subunit protein uS10 (102 aa).

Residues 35–58 form a disordered region; sequence SGPIPLPTKTLEIPSRKSPDGEGT.

It belongs to the universal ribosomal protein uS10 family. Part of the 30S ribosomal subunit.

Functionally, involved in the binding of tRNA to the ribosomes. This is Small ribosomal subunit protein uS10 from Halorubrum lacusprofundi (strain ATCC 49239 / DSM 5036 / JCM 8891 / ACAM 34).